A 337-amino-acid chain; its full sequence is Probable cytosolic iron-sulfur protein assembly protein Ciao1 (337 aa).

WD repeat units follow at residues 12-51 (GHRG…RWVA), 58-97 (GHSR…FECN), 102-141 (GHEN…EYEC), 147-186 (THTQ…SDWS), 193-232 (SHES…NEFG), 251-290 (YHSR…SPHE), and 301-337 (AHSQ…EPEE).

This sequence belongs to the WD repeat CIA1 family.

Essential component of the cytosolic iron-sulfur (Fe/S) protein assembly machinery. Required for the maturation of extramitochondrial Fe/S proteins. The chain is Probable cytosolic iron-sulfur protein assembly protein Ciao1 from Aedes aegypti (Yellowfever mosquito).